The following is a 75-amino-acid chain: MSRISLGVKEVTVIPREEAKELLKRMKLRPWQLPWIRASDPLAQKAGAKPGDVLKIVRESPTAGEAVVYRLVVPG.

Belongs to the archaeal Rpo5/eukaryotic RPB5 RNA polymerase subunit family. As to quaternary structure, part of the RNA polymerase complex.

The protein localises to the cytoplasm. The enzyme catalyses RNA(n) + a ribonucleoside 5'-triphosphate = RNA(n+1) + diphosphate. In terms of biological role, DNA-dependent RNA polymerase (RNAP) catalyzes the transcription of DNA into RNA using the four ribonucleoside triphosphates as substrates. The chain is DNA-directed RNA polymerase subunit Rpo5 from Pyrobaculum aerophilum (strain ATCC 51768 / DSM 7523 / JCM 9630 / CIP 104966 / NBRC 100827 / IM2).